Reading from the N-terminus, the 820-residue chain is DNA mismatch repair protein MutS (820 aa).

618-625 contacts ATP; it reads GPNMAGKS.

This sequence belongs to the DNA mismatch repair MutS family.

This protein is involved in the repair of mismatches in DNA. It is possible that it carries out the mismatch recognition step. This protein has a weak ATPase activity. In Chlamydia trachomatis serovar A (strain ATCC VR-571B / DSM 19440 / HAR-13), this protein is DNA mismatch repair protein MutS.